Here is a 936-residue protein sequence, read N- to C-terminus: Protocadherin alpha-5 (936 aa).

The N-terminal stretch at 1–28 is a signal peptide; sequence MVYSRRGSLGSRLLLLWLLLAYWKAGSG. At 29 to 696 the chain is on the extracellular side; that stretch reads QLHYSIPEEA…GPEAALVDVN (668 aa). 6 consecutive Cadherin domains span residues 33-132, 156-241, 242-349, 350-454, 455-564, and 580-677; these read SIPE…PPRF, ASDL…APEF, DKSI…TPEM, AITT…APAF, AQPQ…APAL, and VPRS…APKA. Asn264 carries N-linked (GlcNAc...) asparagine glycosylation. Asn547 is a glycosylation site (N-linked (GlcNAc...) asparagine). A helical membrane pass occupies residues 697–717; that stretch reads VYLIIAICAVSSLLVLTLLLY. Residues 718–936 are Cytoplasmic-facing; that stretch reads TALRCSAQPT…GNSTTDNSDQ (219 aa). Disordered regions lie at residues 759–793 and 816–936; these read SGEAPPKTDLMAFSPSLPQGPTSTDNPRQPNPDWR and AGPG…NSDQ. PXXP repeat units lie at residues 773–776, 785–788, 818–821, 873–876, and 877–890; these read PSLP, PRQP, PGGP, KFII, and PGSPAIISIRQEPT. The interval 773-890 is 5 X 4 AA repeats of P-X-X-P; the sequence is PSLPQGPTST…AIISIRQEPT (118 aa). The span at 774 to 786 shows a compositional bias: polar residues; it reads SLPQGPTSTDNPR. Residues 895–909 show a composition bias toward basic and acidic residues; it reads DKSDFITFGKKEETK.

The protein localises to the cell membrane. Potential calcium-dependent cell-adhesion protein. May be involved in the establishment and maintenance of specific neuronal connections in the brain. The chain is Protocadherin alpha-5 (PCDHA5) from Homo sapiens (Human).